The following is a 558-amino-acid chain: Formate--tetrahydrofolate ligase (558 aa).

67 to 74 (TPAGEGKT) is a binding site for ATP.

Belongs to the formate--tetrahydrofolate ligase family.

The enzyme catalyses (6S)-5,6,7,8-tetrahydrofolate + formate + ATP = (6R)-10-formyltetrahydrofolate + ADP + phosphate. It participates in one-carbon metabolism; tetrahydrofolate interconversion. This is Formate--tetrahydrofolate ligase from Roseobacter denitrificans (strain ATCC 33942 / OCh 114) (Erythrobacter sp. (strain OCh 114)).